The primary structure comprises 279 residues: ATP synthase gamma chain (279 aa).

This sequence belongs to the ATPase gamma chain family. F-type ATPases have 2 components, CF(1) - the catalytic core - and CF(0) - the membrane proton channel. CF(1) has five subunits: alpha(3), beta(3), gamma(1), delta(1), epsilon(1). CF(0) has three main subunits: a, b and c.

The protein resides in the cell membrane. Produces ATP from ADP in the presence of a proton gradient across the membrane. The gamma chain is believed to be important in regulating ATPase activity and the flow of protons through the CF(0) complex. The polypeptide is ATP synthase gamma chain (Mycoplasma genitalium (strain ATCC 33530 / DSM 19775 / NCTC 10195 / G37) (Mycoplasmoides genitalium)).